A 206-amino-acid polypeptide reads, in one-letter code: Reticulon-like protein B13 (206 aa).

The region spanning 16 to 206 (VEDIYLWRRK…GTEEKVKKSE (191 aa)) is the Reticulon domain. A run of 3 helical transmembrane segments spans residues 27–47 (LAFS…FYGF), 50–70 (ITIV…WGSL), and 134–154 (IGNL…GLTV).

The protein resides in the endoplasmic reticulum membrane. The protein is Reticulon-like protein B13 (RTNLB13) of Arabidopsis thaliana (Mouse-ear cress).